The primary structure comprises 177 residues: Isopentenyl-diphosphate Delta-isomerase (177 aa).

Residues histidine 22 and histidine 28 each contribute to the Mn(2+) site. In terms of domain architecture, Nudix hydrolase spans 26–160 (LRHMAISVFV…PERFTPWLRI (135 aa)). The active site involves cysteine 62. Histidine 64 is a Mn(2+) binding site. Residue glutamate 82 participates in Mg(2+) binding. Mn(2+) is bound by residues glutamate 108 and glutamate 110. The active site involves glutamate 110.

It belongs to the IPP isomerase type 1 family. The cofactor is Mg(2+). Mn(2+) serves as cofactor.

The protein resides in the cytoplasm. It catalyses the reaction isopentenyl diphosphate = dimethylallyl diphosphate. It functions in the pathway isoprenoid biosynthesis; dimethylallyl diphosphate biosynthesis; dimethylallyl diphosphate from isopentenyl diphosphate: step 1/1. Its pathway is porphyrin-containing compound metabolism; chlorophyll biosynthesis. In terms of biological role, catalyzes the 1,3-allylic rearrangement of the homoallylic substrate isopentenyl (IPP) to its highly electrophilic allylic isomer, dimethylallyl diphosphate (DMAPP). The protein is Isopentenyl-diphosphate Delta-isomerase of Cereibacter sphaeroides (strain KD131 / KCTC 12085) (Rhodobacter sphaeroides).